The following is a 140-amino-acid chain: MKTAIYPGSFNPFHNGHLNILKKAILLFDKVYVVVSKNINKSLDPDLQSRVKNIKNLIRDFNNVEIIINENKLTTTIAKELNASFIIRGLRSQTDFEYEIKYYDGFKSLYPNIEVIYFISDYDKRSLSSTILREIEFYKK.

Substrate is bound at residue serine 9. Residues 9-10 (SF) and histidine 17 contribute to the ATP site. The substrate site is built by lysine 41, threonine 74, and arginine 88. ATP is bound by residues 89-91 (GLR), glutamate 99, and 124-130 (KRSLSST).

Belongs to the bacterial CoaD family. As to quaternary structure, homohexamer. Requires Mg(2+) as cofactor.

Its subcellular location is the cytoplasm. It catalyses the reaction (R)-4'-phosphopantetheine + ATP + H(+) = 3'-dephospho-CoA + diphosphate. Its pathway is cofactor biosynthesis; coenzyme A biosynthesis; CoA from (R)-pantothenate: step 4/5. In terms of biological role, reversibly transfers an adenylyl group from ATP to 4'-phosphopantetheine, yielding dephospho-CoA (dPCoA) and pyrophosphate. The chain is Phosphopantetheine adenylyltransferase from Mycoplasma mycoides subsp. mycoides SC (strain CCUG 32753 / NCTC 10114 / PG1).